The primary structure comprises 609 residues: Protein KINESIN LIGHT CHAIN-RELATED 1 (609 aa).

Residues 1 to 77 (MPAMPGLVSV…TAAVIDVDDP (77 aa)) are disordered. Residues 38-55 (KKTPSSTPSRSKPSPNRS) are compositionally biased toward low complexity. 10 TPR repeats span residues 140 to 173 (AMSL…PDPT), 183 to 216 (FSGH…QIQT), 225 to 258 (GETC…HRAH), 267 to 301 (AADR…IASG), 307 to 340 (ASID…FKAS), 349 to 382 (ASVF…YNKP), 392 to 425 (AGGL…LEDK), 433 to 466 (AGLE…LRAA), 474 to 507 (GVVL…LEQE), and 516 to 549 (LGVY…REEK). Residues 582–609 (LQNLIDPNARPPKKESSAKKWPSLGFKF) are disordered.

Belongs to the kinesin light chain family. Interacts with IQD1.

It localises to the cytoplasm. The protein localises to the cytoskeleton. This is Protein KINESIN LIGHT CHAIN-RELATED 1 from Arabidopsis thaliana (Mouse-ear cress).